The chain runs to 89 residues: Large ribosomal subunit protein eL43 (89 aa).

Zn(2+) is bound by residues cysteine 38, cysteine 41, cysteine 56, and cysteine 59. The C4-type zinc-finger motif lies at 38-59; it reads CPSCDRPGVKRESRGIWKCRKC.

Belongs to the eukaryotic ribosomal protein eL43 family. Putative zinc-binding subfamily. In terms of assembly, part of the 50S ribosomal subunit. Zn(2+) serves as cofactor.

In terms of biological role, binds to the 23S rRNA. This chain is Large ribosomal subunit protein eL43, found in Methanothermobacter thermautotrophicus (strain ATCC 29096 / DSM 1053 / JCM 10044 / NBRC 100330 / Delta H) (Methanobacterium thermoautotrophicum).